The chain runs to 608 residues: MQRRTFIKSISAMMATSTTLGCVSNSLATEKHVSITDFGLRPNSGDDAIPALQKALAYCKKHPGTSLIFPLGRYDFWSTKADRDFYYISNNDDGIKPVAFPLTEFKNLIIDGQGSRFVFHGGMVPVIVRESSGITLKNFSVDWDVPFHCEGIVEAVNKKESYVDLKIKDGFSYKVENGRFIFVGEGFENPVIKNLLEFDTKRQKQAYMARDNFQREIQPVTTEIRPGVLRLQGKYPTWPKVGNTLLLMQERRDWPAFSVQDTKNTWLENIDIHHSGAMGVIAQLADGIKLDNVNIHPKDGSGRTVSTTVDATHFINCKGHVVLKDCLFQGQIDDGTNVHGMYARVAEIHDSNTITFELVHYQQLGIDIFKPGSKVNFSDSVLNVFHDNVVDKTVRQDAKYWTVSFKEPLDTALKVDDVLDNMTWQPDHVMISGCRFTGNRARGALLTVSGKIIVENNYFSTPMMAIKIGSGGLKWYESGPVESVEIRNNIFDNCNYAKDSSAIDIVPGRKSKATTPYHQNVKIYQNEFRVYNERVLTTSRTQGISFVSNKIVKTSEYPERKSAFAPIHVERSSNFVYQGNDFIGFGHSELLFIDGQLVSGSGKLEGEG.

A signal peptide spans Met-1–Gly-21. A lipid anchor (N-palmitoyl cysteine) is attached at Cys-22. Cys-22 is lipidated: S-diacylglycerol cysteine. PbH1 repeat units lie at residues Thr-262–Asn-292, Lys-318–Gly-340, Pro-426–Val-448, Ser-449–Ser-470, and Val-481–Pro-507.

The protein belongs to the glycosyl hydrolase 110 family. A subfamily.

It is found in the cell membrane. The catalysed reaction is Hydrolysis of terminal, non-reducing branched (1-&gt;3)-alpha-D-galactosidic residues, producing free D-galactose.. It catalyses the reaction Hydrolysis of terminal, non-reducing alpha-D-galactose residues in alpha-D-galactosides, including galactose oligosaccharides, galactomannans and galactolipids.. Alpha-galactosidase that specifically removes branched alpha-1,3-linked galactose residues present in blood group B antigens. Has no activity toward linear alpha-1,3-linked galactose residues. This chain is Alpha-1,3-galactosidase A (glaA), found in Shewanella woodyi (strain ATCC 51908 / MS32).